A 312-amino-acid polypeptide reads, in one-letter code: Olfactory receptor 8K3 (312 aa).

The Extracellular segment spans residues 1 to 25 (MEQHNLTTVNEFILTGITDIAELQA). Asn5 carries N-linked (GlcNAc...) asparagine glycosylation. The helical transmembrane segment at 26–46 (PLFALFLMIYVISVMGNLGMI) threads the bilayer. The Cytoplasmic segment spans residues 47–54 (VLTKLDSR). The chain crosses the membrane as a helical span at residues 55-75 (LQTPMYFFLRHLAFMDLGYST). Topologically, residues 76–99 (TVGPKMLVNFVVDKNIISYYFCAT) are extracellular. Cys97 and Cys189 are oxidised to a cystine. The helical transmembrane segment at 100 to 120 (QLAFFLVFIGSELFILSAMSY) threads the bilayer. The Cytoplasmic segment spans residues 121-139 (DLYVAICNPLLYTVIMSRR). Residues 140-160 (VCQVLVAIPYLYCTFISLLVT) form a helical membrane-spanning segment. Over 161 to 197 (IKIFTLSFCGYNVISHFYCDSLPLLPLLCSNTHEIEL) the chain is Extracellular. Residues 198–217 (IILIFAAIDLISSLLIVLLS) form a helical membrane-spanning segment. Residues 218–236 (YLLILVAILRMNSAGRQKA) are Cytoplasmic-facing. The chain crosses the membrane as a helical span at residues 237–257 (FSTCGAHLTVVIVFYGTLLFM). Topologically, residues 258-270 (YVQPKSSHSFDTD) are extracellular. The chain crosses the membrane as a helical span at residues 271–291 (KVASIFYTLVIPMLNPLIYSL). Residues 292–312 (RNKDVKYALRRTWNNLCNIFV) are Cytoplasmic-facing.

Belongs to the G-protein coupled receptor 1 family.

Its subcellular location is the cell membrane. Odorant receptor. The polypeptide is Olfactory receptor 8K3 (OR8K3) (Homo sapiens (Human)).